A 360-amino-acid polypeptide reads, in one-letter code: Phospho-N-acetylmuramoyl-pentapeptide-transferase (360 aa).

10 helical membrane passes run 27–47 (GAMITSALIVFLFGPTIINSL), 71–91 (TPTMGGLMIMTGILASCLLWA), 93–113 (LASVYVWVVLMVSVGFGAIGF), 128–148 (FSGKARLGIEFLIAAIAAFTI), 168–188 (LVINLSWFFIPFAAFVMVGAG), 199–219 (GLAIVPVMVAAASFGFIAYLS), 239–259 (LAVVLGAVIGAGLGFLWFNAP), 262–282 (AIFMGDTGSLALGGMLGTVAV), 288–308 (IVLAIIGGLFVMEALSVIIQV), and 337–357 (QVVIRFWIVAIILAMIGLSTL).

It belongs to the glycosyltransferase 4 family. MraY subfamily. Requires Mg(2+) as cofactor.

It localises to the cell inner membrane. The enzyme catalyses UDP-N-acetyl-alpha-D-muramoyl-L-alanyl-gamma-D-glutamyl-meso-2,6-diaminopimeloyl-D-alanyl-D-alanine + di-trans,octa-cis-undecaprenyl phosphate = di-trans,octa-cis-undecaprenyl diphospho-N-acetyl-alpha-D-muramoyl-L-alanyl-D-glutamyl-meso-2,6-diaminopimeloyl-D-alanyl-D-alanine + UMP. Its pathway is cell wall biogenesis; peptidoglycan biosynthesis. Catalyzes the initial step of the lipid cycle reactions in the biosynthesis of the cell wall peptidoglycan: transfers peptidoglycan precursor phospho-MurNAc-pentapeptide from UDP-MurNAc-pentapeptide onto the lipid carrier undecaprenyl phosphate, yielding undecaprenyl-pyrophosphoryl-MurNAc-pentapeptide, known as lipid I. The polypeptide is Phospho-N-acetylmuramoyl-pentapeptide-transferase (Brucella abortus (strain S19)).